A 237-amino-acid chain; its full sequence is Mitochondrial inner membrane protease atp23 (237 aa).

Residues 1-18 (MSTSESSNNGSQPGNQDT) are compositionally biased toward polar residues. The disordered stretch occupies residues 1 to 24 (MSTSESSNNGSQPGNQDTGYIPGD). Histidine 136 provides a ligand contact to a divalent metal cation. Glutamate 137 is a catalytic residue. A divalent metal cation is bound at residue histidine 140.

The protein belongs to the peptidase M76 family.

The protein resides in the mitochondrion inner membrane. Has a dual role in the assembly of mitochondrial ATPase. Acts as a protease that removes N-terminal residues of mitochondrial ATPase CF(0) subunit 6 at the intermembrane space side. Also involved in the correct assembly of the membrane-embedded ATPase CF(0) particle, probably mediating association of subunit 6 with the subunit 9 ring. The protein is Mitochondrial inner membrane protease atp23 (atp23) of Aspergillus niger (strain ATCC MYA-4892 / CBS 513.88 / FGSC A1513).